Here is a 239-residue protein sequence, read N- to C-terminus: ATP-dependent dethiobiotin synthetase BioD (239 aa).

15–20 is a binding site for ATP; sequence EIGKTF. Residue Thr-19 coordinates Mg(2+). Lys-40 is a catalytic residue. ATP-binding positions include Asp-57, 118 to 121, and 178 to 179; these read EGVG and NH. Mg(2+) is bound by residues Asp-57 and Glu-118.

It belongs to the dethiobiotin synthetase family. In terms of assembly, homodimer. It depends on Mg(2+) as a cofactor.

The protein resides in the cytoplasm. The enzyme catalyses (7R,8S)-7,8-diammoniononanoate + CO2 + ATP = (4R,5S)-dethiobiotin + ADP + phosphate + 3 H(+). It participates in cofactor biosynthesis; biotin biosynthesis; biotin from 7,8-diaminononanoate: step 1/2. Functionally, catalyzes a mechanistically unusual reaction, the ATP-dependent insertion of CO2 between the N7 and N8 nitrogen atoms of 7,8-diaminopelargonic acid (DAPA, also called 7,8-diammoniononanoate) to form a ureido ring. The protein is ATP-dependent dethiobiotin synthetase BioD of Burkholderia cenocepacia (strain HI2424).